The following is a 355-amino-acid chain: Probable aldo-keto reductase 3 (355 aa).

The active-site Proton donor is tyrosine 70. Residue histidine 138 coordinates substrate. Serine 217 to glycine 227 lines the NADP(+) pocket.

It belongs to the aldo/keto reductase family.

This is Probable aldo-keto reductase 3 from Oryza sativa subsp. japonica (Rice).